Here is a 150-residue protein sequence, read N- to C-terminus: Small ribosomal subunit protein bS6 (150 aa).

The interval 99 to 150 (GPSAMLQKRDRDDRGERGERGFGGGGFGGGRDREDRPRRGRDREEAATEETF) is disordered. 2 stretches are compositionally biased toward basic and acidic residues: residues 105-118 (QKRDRDDRGERGER) and 128-144 (GRDREDRPRRGRDREEA).

It belongs to the bacterial ribosomal protein bS6 family.

In terms of biological role, binds together with bS18 to 16S ribosomal RNA. This chain is Small ribosomal subunit protein bS6, found in Azorhizobium caulinodans (strain ATCC 43989 / DSM 5975 / JCM 20966 / LMG 6465 / NBRC 14845 / NCIMB 13405 / ORS 571).